Consider the following 212-residue polypeptide: External core antigen (212 aa).

Residues Met1–Ala19 form the signal peptide. The segment at Gly25–Leu27 is HBEAG. The tract at residues Arg179–Cys212 is disordered. The segment covering Gln180–Ser205 has biased composition (basic residues). A 1; half-length repeat occupies Thr184–Pro190. A 3 X 8 AA repeats of S-P-R-R-R-R-S-Q region spans residues Thr184 to Gln206. The propeptide occupies Thr184–Cys212. 2 tandem repeats follow at residues Ser191–Gln198 and Ser199–Gln206.

It belongs to the orthohepadnavirus precore antigen family. In terms of assembly, homodimerizes. Phosphorylated. In terms of processing, cleaved by host furin.

Its subcellular location is the secreted. The protein localises to the host nucleus. Its function is as follows. May regulate immune response to the intracellular capsid in acting as a T-cell tolerogen, by having an immunoregulatory effect which prevents destruction of infected cells by cytotoxic T-cells. This immune regulation may predispose to chronicity during perinatal infections and prevent severe liver injury during adult infections. In Hepatitis B virus genotype D subtype ayw (isolate Australia/AustKW/1991) (HBV-D), this protein is External core antigen.